Here is a 128-residue protein sequence, read N- to C-terminus: Small ribosomal subunit protein bS16 (128 aa).

Residues alanine 107–serine 128 form a disordered region. Residues glutamate 117 to serine 128 show a composition bias toward acidic residues.

This sequence belongs to the bacterial ribosomal protein bS16 family.

This Synechococcus sp. (strain CC9311) protein is Small ribosomal subunit protein bS16.